A 115-amino-acid chain; its full sequence is Large ribosomal subunit protein bL20 (115 aa).

The protein belongs to the bacterial ribosomal protein bL20 family.

Its function is as follows. Binds directly to 23S ribosomal RNA and is necessary for the in vitro assembly process of the 50S ribosomal subunit. It is not involved in the protein synthesizing functions of that subunit. The chain is Large ribosomal subunit protein bL20 from Synechococcus sp. (strain CC9605).